The primary structure comprises 102 residues: Small ribosomal subunit protein uS10 (102 aa).

This sequence belongs to the universal ribosomal protein uS10 family. Part of the 30S ribosomal subunit.

Functionally, involved in the binding of tRNA to the ribosomes. This Methanothrix thermoacetophila (strain DSM 6194 / JCM 14653 / NBRC 101360 / PT) (Methanosaeta thermophila) protein is Small ribosomal subunit protein uS10.